The primary structure comprises 363 residues: Pyrimidine monooxygenase RutA (363 aa).

FMN is bound by residues 49 to 50 (IK), asparagine 115, glutamate 124, 140 to 141 (RY), and serine 190.

The protein belongs to the NtaA/SnaA/DszA monooxygenase family. RutA subfamily.

It catalyses the reaction uracil + FMNH2 + NADH + O2 = (Z)-3-ureidoacrylate + FMN + NAD(+) + H2O + H(+). The enzyme catalyses thymine + FMNH2 + NADH + O2 = (Z)-2-methylureidoacrylate + FMN + NAD(+) + H2O + H(+). In terms of biological role, catalyzes the pyrimidine ring opening between N-3 and C-4 by an unusual flavin hydroperoxide-catalyzed mechanism, adding oxygen atoms in the process to yield ureidoacrylate peracid, that immediately reacts with FMN forming ureidoacrylate and FMN-N(5)-oxide. The FMN-N(5)-oxide reacts spontaneously with NADH to produce FMN. Requires the flavin reductase RutF to regenerate FMN in vivo. This is Pyrimidine monooxygenase RutA from Enterobacter sp. (strain 638).